The sequence spans 213 residues: Cytochrome b6 (213 aa).

The helical transmembrane segment at 30–50 (IFFCLGGLTLLCFIVQCLTGI) threads the bilayer. Cys33 contributes to the heme c binding site. The heme b site is built by His84 and His98. 3 consecutive transmembrane segments (helical) span residues 88–108 (CQLM…TGAF), 114–134 (LNWV…FTGY), and 184–204 (LHVM…FIMI). Heme b is bound by residues His185 and His200.

The protein belongs to the cytochrome b family. PetB subfamily. The subunits of the cytochrome bc complex are a Rieske Fe-S protein (PetC), cytochrome b6 (PetB), subunit IV (PetD), and a diheme cytochrome c (PetX). It depends on heme b as a cofactor. Requires heme c as cofactor.

It localises to the cell membrane. Functionally, component of the cytochrome bc complex which donates electrons to the photosynthetic reaction center. In Heliomicrobium gestii (Heliobacterium gestii), this protein is Cytochrome b6.